Here is a 20-residue protein sequence, read N- to C-terminus: Astacin-like peptidase p18 (20 aa).

Positions 1-20 constitute a Peptidase M12A domain; that stretch reads NAIPGNYYRWPYAKVPYVID.

Zn(2+) is required as a cofactor.

In terms of biological role, active against casein. Has a role as a digestive enzyme. This chain is Astacin-like peptidase p18, found in Argiope aurantia (Black-and-yellow garden spider).